We begin with the raw amino-acid sequence, 105 residues long: ATP-dependent Clp protease adapter protein ClpS (105 aa).

The protein belongs to the ClpS family. Binds to the N-terminal domain of the chaperone ClpA.

In terms of biological role, involved in the modulation of the specificity of the ClpAP-mediated ATP-dependent protein degradation. The sequence is that of ATP-dependent Clp protease adapter protein ClpS from Aeromonas salmonicida (strain A449).